The primary structure comprises 116 residues: Large ribosomal subunit protein bL17 (116 aa).

Belongs to the bacterial ribosomal protein bL17 family. In terms of assembly, part of the 50S ribosomal subunit. Contacts protein L32.

The protein is Large ribosomal subunit protein bL17 of Prochlorococcus marinus (strain MIT 9301).